The primary structure comprises 219 residues: Transmembrane protein 125 (219 aa).

The next 4 helical transmembrane spans lie at 36–56, 68–88, 114–134, and 147–167; these read LCFV…VALL, LATG…QLMS, ALVV…LAGL, and MLSV…GLLL.

It is found in the membrane. In Homo sapiens (Human), this protein is Transmembrane protein 125 (TMEM125).